The following is a 43-amino-acid chain: Protein PsbN (43 aa).

Residues 5 to 27 traverse the membrane as a helical segment; the sequence is TLVAISISCLLVSFTGYALYTAF.

Belongs to the PsbN family.

It localises to the plastid. Its subcellular location is the chloroplast thylakoid membrane. Functionally, may play a role in photosystem I and II biogenesis. The protein is Protein PsbN of Cryptomeria japonica (Japanese cedar).